The primary structure comprises 165 residues: MSHPALTQLRALRYFDAIPALEPHLLDWLLLEDSMTKRFEQLGKRVSVTLIREAFVGQSEVEEASGLLPSESRYWLREILLCADGEPWLAGRTVVPESTLCGPEQVLQHLGKTPLGRYLFTSSTLTRDFIEIGRDATLWGRRSRLRLSGKPLLLTELFLPASPLY.

Residues M35, R77, L115, and E156 each coordinate substrate.

Belongs to the UbiC family. In terms of assembly, monomer.

The protein resides in the cytoplasm. It catalyses the reaction chorismate = 4-hydroxybenzoate + pyruvate. Its pathway is cofactor biosynthesis; ubiquinone biosynthesis. In terms of biological role, removes the pyruvyl group from chorismate, with concomitant aromatization of the ring, to provide 4-hydroxybenzoate (4HB) for the ubiquinone pathway. The sequence is that of Chorismate pyruvate-lyase from Salmonella schwarzengrund (strain CVM19633).